Here is a 351-residue protein sequence, read N- to C-terminus: Protein FAM118B (351 aa).

Ala-2 bears the N-acetylalanine mark. Ser-9 is subject to Phosphoserine.

The protein belongs to the FAM118 family.

The protein localises to the nucleus. It localises to the cajal body. Functionally, may play a role in Cajal bodies formation. The polypeptide is Protein FAM118B (FAM118B) (Homo sapiens (Human)).